The following is a 311-amino-acid chain: MAGKMKLFSVTSERPLATKIADYLDIPLCEVELQKFSDGEVKINIEESIRGTNAYVVQSMNSNVNERLMELLIMVDALKRASVHSINIIMPYYGYARQDRKARSREPITAKLMANLIQRAGADRLITVDLHAAQIQGFFNIPIDHLSAIPLIGDYLIENYGEKDVVVVAPDHSGVVRARRIADRLNAPIAILNRKPRPHEDEIMSVIGDVKGKVAIVVDDIIDTGVRATTSADILLEKGAVEVIACATHSVMAGNATERLQNSNIKEVITSDSIDLPEDKQFDKLTTISIGRILGRAIEGVQENRSLHPLF.

Residues 38 to 40 (DGE) and 97 to 98 (RQ) contribute to the ATP site. Mg(2+)-binding residues include His-131 and Asp-171. Asp-219 provides a ligand contact to D-ribose 5-phosphate.

It belongs to the ribose-phosphate pyrophosphokinase family. Class I subfamily. As to quaternary structure, homohexamer. The cofactor is Mg(2+).

It is found in the cytoplasm. The catalysed reaction is D-ribose 5-phosphate + ATP = 5-phospho-alpha-D-ribose 1-diphosphate + AMP + H(+). It participates in metabolic intermediate biosynthesis; 5-phospho-alpha-D-ribose 1-diphosphate biosynthesis; 5-phospho-alpha-D-ribose 1-diphosphate from D-ribose 5-phosphate (route I): step 1/1. Functionally, involved in the biosynthesis of the central metabolite phospho-alpha-D-ribosyl-1-pyrophosphate (PRPP) via the transfer of pyrophosphoryl group from ATP to 1-hydroxyl of ribose-5-phosphate (Rib-5-P). This Listeria monocytogenes serotype 4b (strain F2365) protein is Putative ribose-phosphate pyrophosphokinase 2.